The chain runs to 363 residues: Homeobox protein Hox-A2a (363 aa).

Disordered regions lie at residues D30–E88, S98–C117, R189–E220, and D268–S308. The span at S31–R44 shows a compositional bias: polar residues. Positions E88–R93 match the Antp-type hexapeptide motif. Polar residues predominate over residues L103 to N113. A DNA-binding region (homeobox) is located at residues S137–T196.

Belongs to the Antp homeobox family. Proboscipedia subfamily.

Its subcellular location is the nucleus. Functionally, sequence-specific transcription factor which is part of a developmental regulatory system that provides cells with specific positional identities on the anterior-posterior axis. In Takifugu rubripes (Japanese pufferfish), this protein is Homeobox protein Hox-A2a (hoxa2a).